A 392-amino-acid polypeptide reads, in one-letter code: UPF0229 protein CPE1333 (392 aa).

Residues 75-100 (VTTGTGEERRGDRISSDKRKAISNNK) form a disordered region. Positions 80 to 94 (GEERRGDRISSDKRK) are enriched in basic and acidic residues.

The protein belongs to the UPF0229 family.

In Clostridium perfringens (strain 13 / Type A), this protein is UPF0229 protein CPE1333.